A 96-amino-acid chain; its full sequence is MFIVKAEIRDKKGKSFSRKLRIEDKFPGVLYGFNNTPISITMDHNLVFNLQKKEDFYKETLCLLIKEKKYTVKVHAIQRHAFKMKILHIDFIYAKI.

Belongs to the bacterial ribosomal protein bL25 family. In terms of assembly, part of the 50S ribosomal subunit; part of the 5S rRNA/L5/L18/L25 subcomplex. Contacts the 5S rRNA. Binds to the 5S rRNA independently of L5 and L18.

This is one of the proteins that binds to the 5S RNA in the ribosome where it forms part of the central protuberance. The chain is Large ribosomal subunit protein bL25 from Buchnera aphidicola subsp. Schizaphis graminum (strain Sg).